The primary structure comprises 368 residues: Spermidine/putrescine import ATP-binding protein PotA (368 aa).

Residues 8 to 238 (IELRGVTKNF…PANLYVARFV (231 aa)) form the ABC transporter domain. 40 to 47 (GPSGCGKT) serves as a coordination point for ATP.

The protein belongs to the ABC transporter superfamily. Spermidine/putrescine importer (TC 3.A.1.11.1) family. The complex is composed of two ATP-binding proteins (PotA), two transmembrane proteins (PotB and PotC) and a solute-binding protein (PotD).

It localises to the cell inner membrane. It carries out the reaction ATP + H2O + polyamine-[polyamine-binding protein]Side 1 = ADP + phosphate + polyamineSide 2 + [polyamine-binding protein]Side 1.. Functionally, part of the ABC transporter complex PotABCD involved in spermidine/putrescine import. Responsible for energy coupling to the transport system. In Nitratidesulfovibrio vulgaris (strain ATCC 29579 / DSM 644 / CCUG 34227 / NCIMB 8303 / VKM B-1760 / Hildenborough) (Desulfovibrio vulgaris), this protein is Spermidine/putrescine import ATP-binding protein PotA.